Here is a 428-residue protein sequence, read N- to C-terminus: 3-phosphoshikimate 1-carboxyvinyltransferase (428 aa).

3-phosphoshikimate is bound by residues K20, S21, and R25. K20 lines the phosphoenolpyruvate pocket. Residues G93 and R122 each coordinate phosphoenolpyruvate. Residues S167, Q169, D317, and K344 each contribute to the 3-phosphoshikimate site. Q169 is a phosphoenolpyruvate binding site. The active-site Proton acceptor is the D317. The phosphoenolpyruvate site is built by R348 and R390.

It belongs to the EPSP synthase family. Monomer.

It is found in the cytoplasm. The catalysed reaction is 3-phosphoshikimate + phosphoenolpyruvate = 5-O-(1-carboxyvinyl)-3-phosphoshikimate + phosphate. It participates in metabolic intermediate biosynthesis; chorismate biosynthesis; chorismate from D-erythrose 4-phosphate and phosphoenolpyruvate: step 6/7. Catalyzes the transfer of the enolpyruvyl moiety of phosphoenolpyruvate (PEP) to the 5-hydroxyl of shikimate-3-phosphate (S3P) to produce enolpyruvyl shikimate-3-phosphate and inorganic phosphate. In Leptospira biflexa serovar Patoc (strain Patoc 1 / ATCC 23582 / Paris), this protein is 3-phosphoshikimate 1-carboxyvinyltransferase.